We begin with the raw amino-acid sequence, 231 residues long: MGQKTHPIGFRLGVIKDWPSKWYPPKKDYAKLLHEDLKIKNYIKKRYKVAGVSKVEIERIVDKVRIKIHTAKPAIVIGRRGQEVDRLKKTIERMLPGKEISISVLEVKVPELDAQLVAEDIALQIERRVSHRRAMKRAIDNALKAGQKGVKVQVKGRIGGAARARKEWFLVGRMPLQTLRADIDYGFATAYTKYGILSVKVWIYKGDVLKGGKEEILKKIEEEIKQAAKEG.

The 70-residue stretch at 39–108 (IKNYIKKRYK…EISISVLEVK (70 aa)) folds into the KH type-2 domain.

This sequence belongs to the universal ribosomal protein uS3 family. As to quaternary structure, part of the 30S ribosomal subunit. Forms a tight complex with proteins S10 and S14.

Binds the lower part of the 30S subunit head. Binds mRNA in the 70S ribosome, positioning it for translation. The protein is Small ribosomal subunit protein uS3 of Aquifex pyrophilus.